The chain runs to 376 residues: Alanine racemase (376 aa).

The Proton acceptor; specific for D-alanine role is filled by Lys-40. At Lys-40 the chain carries N6-(pyridoxal phosphate)lysine. Arg-138 lines the substrate pocket. Tyr-270 serves as the catalytic Proton acceptor; specific for L-alanine. Met-317 provides a ligand contact to substrate.

The protein belongs to the alanine racemase family. Pyridoxal 5'-phosphate serves as cofactor.

The catalysed reaction is L-alanine = D-alanine. It functions in the pathway amino-acid biosynthesis; D-alanine biosynthesis; D-alanine from L-alanine: step 1/1. In terms of biological role, catalyzes the interconversion of L-alanine and D-alanine. May also act on other amino acids. This is Alanine racemase (alr) from Lactobacillus delbrueckii subsp. bulgaricus (strain ATCC 11842 / DSM 20081 / BCRC 10696 / JCM 1002 / NBRC 13953 / NCIMB 11778 / NCTC 12712 / WDCM 00102 / Lb 14).